The sequence spans 625 residues: Cytochrome c oxidase subunit 1 (625 aa).

Residues 23–43 (IAIMYLIAGTLFFVKAGVMAL) traverse the membrane as a helical segment. Fe(II)-heme a is bound at residue histidine 69. 6 helical membrane passes run 72–92 (IMLFLAATPLLFAFMNYVIPL), 99–119 (VAFPFVNALGFWIFFFGGLLL), 151–171 (FYVLGLQVSGIGTLISAINFL), 195–215 (FISSTLILFAFTPLAAGLALL), 240–260 (IFWIFGHPEVYILVLPAFGII), and 272–292 (LFGYTAMVFATMIIAFLGFMV). Histidine 246 and tyrosine 250 together coordinate Cu cation. A cross-link (1'-histidyl-3'-tyrosine (His-Tyr)) is located at residues 246 to 250 (HPEVY). Positions 295 and 296 each coordinate Cu cation. 2 consecutive transmembrane segments (helical) span residues 309–329 (IFAVATMTIAVPTGIKIFNWL) and 343–363 (MLFASSFVPTFVLGGVTGVML). Histidine 381 serves as a coordination point for heme a3. The next 5 helical transmembrane spans lie at 382–402 (FHYIIVGGIVLSLFAGLFYWY), 417–437 (LFFWVFYIGFHLTFFVQHLLG), 460–480 (ISTIGTFFMSAGVILLVINVI), 551–571 (SILPFIMSIGLFFAGFGLIML), and 577–597 (IINPWIVAIGGLALTFGCMFV). Histidine 383 contacts Fe(II)-heme a.

Belongs to the heme-copper respiratory oxidase family.

The protein resides in the cell membrane. The catalysed reaction is 4 Fe(II)-[cytochrome c] + O2 + 8 H(+)(in) = 4 Fe(III)-[cytochrome c] + 2 H2O + 4 H(+)(out). It participates in energy metabolism; oxidative phosphorylation. In terms of biological role, cytochrome c oxidase is the component of the respiratory chain that catalyzes the reduction of oxygen to water. Subunits 1-3 form the functional core of the enzyme complex. CO I is the catalytic subunit of the enzyme. Electrons originating in cytochrome c are transferred via the copper A center of subunit 2 and heme A of subunit 1 to the bimetallic center formed by heme A3 and copper B. The chain is Cytochrome c oxidase subunit 1 (ctaD) from Alkalihalophilus pseudofirmus (strain ATCC BAA-2126 / JCM 17055 / OF4) (Bacillus pseudofirmus).